A 513-amino-acid polypeptide reads, in one-letter code: Lysine--tRNA ligase (513 aa).

Residues E423 and E430 each coordinate Mg(2+).

It belongs to the class-II aminoacyl-tRNA synthetase family. In terms of assembly, homodimer. It depends on Mg(2+) as a cofactor.

It is found in the cytoplasm. The catalysed reaction is tRNA(Lys) + L-lysine + ATP = L-lysyl-tRNA(Lys) + AMP + diphosphate. In Anaeromyxobacter dehalogenans (strain 2CP-1 / ATCC BAA-258), this protein is Lysine--tRNA ligase.